A 423-amino-acid chain; its full sequence is UDP-N-acetylglucosamine 1-carboxyvinyltransferase 1 (423 aa).

23-24 (KN) serves as a coordination point for phosphoenolpyruvate. R96 lines the UDP-N-acetyl-alpha-D-glucosamine pocket. The active-site Proton donor is C120. Residue C120 is modified to 2-(S-cysteinyl)pyruvic acid O-phosphothioketal. UDP-N-acetyl-alpha-D-glucosamine-binding residues include D309 and V331.

It belongs to the EPSP synthase family. MurA subfamily.

Its subcellular location is the cytoplasm. It carries out the reaction phosphoenolpyruvate + UDP-N-acetyl-alpha-D-glucosamine = UDP-N-acetyl-3-O-(1-carboxyvinyl)-alpha-D-glucosamine + phosphate. The protein operates within cell wall biogenesis; peptidoglycan biosynthesis. Cell wall formation. Adds enolpyruvyl to UDP-N-acetylglucosamine. The protein is UDP-N-acetylglucosamine 1-carboxyvinyltransferase 1 of Streptococcus pyogenes serotype M1.